The following is an 877-amino-acid chain: MSKFTTEEIRSKFISYFKANNHTHVSSSPLIPHNDPSLMFVNSGMVQFKNVFTGQEKRPYDKAVTSQKSLRAGGKHNDLENVGYTARHHTFFEMLGNFSFGDYFKEQAIYYAWNLLTKEFELPKDKLYATVYHTDDEAASYWKKIAGFSDDRIIRIKTNDNFWSMGDLGPCGPCSEIFYDHGEQIYGGLPGTKDEDGDRFIEIWNMVFMQYEQINKDTRIDLPKKSIDTGMGLERMTAVLQHVNNNYDIDLFQEIISFTENILKVKVEAEAKFSYRVIADHLRACSFLIADGVVPSSEGRGYVLRRIMRRAMRHAHILGSKEPLMYKLLPKLVDLMGNTYPELKRAESFISSILEQEEIRFKTTLERGLKLLSEETENLNAGGRLSGEVAFKLYDTYGFPLDLTEDILKNRNIAVDHQGFEQQMLEQKECARKSWLGSGESKTDQLWFDIKAKYGSTEFLGYNLNEADGKIVALIKDNALVNDISEIDTQFLLIANQTPFYGESGGQMGDIGVIKTQNCEIEVIDTLKYLGFIIVHKCVLKKGKVITDENANFSIDVKYRQNLRIHHSATHLLHAVLHQILGKHVTQKGSLVATSYLRFDISHPKALTPEEIVLIEDKVNEIIRDNHEVDTTLMSTEDAVKQGAMALFGEKYDSEVRVVKMGETSLELCGGTHVRHTGDIGCFKITSESAIAAGIRRIEAVCGEFVIKLIREKEGLLKNIENSLKTNKNELVSKVNNILERNKELEKELEKTYLASLDLSVEQIEKQAEKIKEIKLIYCHVENLDNKILRQAAENLTKKVEDLVVVYVGNNSSKLSITVGISRAITDKFNAGFIAKELSLFLGGSGGGGQPSIAQAGGSDLAKLPKVKDQLQSLLDA.

The Zn(2+) site is built by His567, His571, Cys669, and His673.

This sequence belongs to the class-II aminoacyl-tRNA synthetase family. Zn(2+) serves as cofactor.

It is found in the cytoplasm. It catalyses the reaction tRNA(Ala) + L-alanine + ATP = L-alanyl-tRNA(Ala) + AMP + diphosphate. Functionally, catalyzes the attachment of alanine to tRNA(Ala) in a two-step reaction: alanine is first activated by ATP to form Ala-AMP and then transferred to the acceptor end of tRNA(Ala). Also edits incorrectly charged Ser-tRNA(Ala) and Gly-tRNA(Ala) via its editing domain. This Rickettsia bellii (strain RML369-C) protein is Alanine--tRNA ligase.